A 477-amino-acid chain; its full sequence is Bifunctional protein HldE (477 aa).

The segment at 1-318 (MKVTLPEFER…ENAVRGRADT (318 aa)) is ribokinase. Lys179 is subject to N6-acetyllysine. Position 195–198 (195–198 (NLSE)) interacts with ATP. Residue Asp264 is part of the active site. The segment at 344–477 (MTNGVFDILH…IKKIQQDKKG (134 aa)) is cytidylyltransferase.

It in the N-terminal section; belongs to the carbohydrate kinase PfkB family. This sequence in the C-terminal section; belongs to the cytidylyltransferase family. As to quaternary structure, homodimer.

It catalyses the reaction D-glycero-beta-D-manno-heptose 7-phosphate + ATP = D-glycero-beta-D-manno-heptose 1,7-bisphosphate + ADP + H(+). It carries out the reaction D-glycero-beta-D-manno-heptose 1-phosphate + ATP + H(+) = ADP-D-glycero-beta-D-manno-heptose + diphosphate. The protein operates within nucleotide-sugar biosynthesis; ADP-L-glycero-beta-D-manno-heptose biosynthesis; ADP-L-glycero-beta-D-manno-heptose from D-glycero-beta-D-manno-heptose 7-phosphate: step 1/4. It participates in nucleotide-sugar biosynthesis; ADP-L-glycero-beta-D-manno-heptose biosynthesis; ADP-L-glycero-beta-D-manno-heptose from D-glycero-beta-D-manno-heptose 7-phosphate: step 3/4. Catalyzes the phosphorylation of D-glycero-D-manno-heptose 7-phosphate at the C-1 position to selectively form D-glycero-beta-D-manno-heptose-1,7-bisphosphate. In terms of biological role, catalyzes the ADP transfer from ATP to D-glycero-beta-D-manno-heptose 1-phosphate, yielding ADP-D-glycero-beta-D-manno-heptose. The protein is Bifunctional protein HldE of Escherichia coli (strain 55989 / EAEC).